Reading from the N-terminus, the 37-residue chain is Photosystem II reaction center protein Psb30 (37 aa).

The helical transmembrane segment at 10–30 threads the bilayer; the sequence is LISLLLLTLIMLAGPAVIALW.

The protein belongs to the Psb30/Ycf12 family. As to quaternary structure, PSII is composed of 1 copy each of membrane proteins PsbA, PsbB, PsbC, PsbD, PsbE, PsbF, PsbH, PsbI, PsbJ, PsbK, PsbL, PsbM, PsbT, PsbX, Psb30/Ycf12, peripheral proteins PsbO, CyanoQ (PsbQ), PsbU, PsbV and a large number of cofactors. It forms dimeric complexes.

It localises to the cell inner membrane. Its function is as follows. A core subunit of photosystem II (PSII), probably helps stabilize the reaction center. This is Photosystem II reaction center protein Psb30 from Gloeobacter violaceus (strain ATCC 29082 / PCC 7421).